The chain runs to 1275 residues: Mediator of RNA polymerase II transcription subunit 33B (1275 aa).

A compositionally biased stretch (low complexity) spans 772 to 791 (GSQSLTPSSGSSSLSTSGGD). Residues 772–792 (GSQSLTPSSGSSSLSTSGGDD) form a disordered region.

This sequence belongs to the Mediator complex subunit 33 family. In terms of assembly, component of the Mediator complex. In terms of tissue distribution, ubiquitous.

It is found in the nucleus. In terms of biological role, component of the Mediator complex, a coactivator involved in the regulated transcription of nearly all RNA polymerase II-dependent genes. Mediator functions as a bridge to convey information from gene-specific regulatory proteins to the basal RNA polymerase II transcription machinery. The Mediator complex, having a compact conformation in its free form, is recruited to promoters by direct interactions with regulatory proteins and serves for the assembly of a functional preinitiation complex with RNA polymerase II and the general transcription factors. Involved in the repression of phenylpropanoid biosynthesis. May compete with MED33B for common binding partners or for occupancy in Mediator. The polypeptide is Mediator of RNA polymerase II transcription subunit 33B (MED33B) (Arabidopsis thaliana (Mouse-ear cress)).